The following is a 234-amino-acid chain: Segregation and condensation protein A (234 aa).

It belongs to the ScpA family. As to quaternary structure, component of a cohesin-like complex composed of ScpA, ScpB and the Smc homodimer, in which ScpA and ScpB bind to the head domain of Smc. The presence of the three proteins is required for the association of the complex with DNA.

The protein resides in the cytoplasm. Participates in chromosomal partition during cell division. May act via the formation of a condensin-like complex containing Smc and ScpB that pull DNA away from mid-cell into both cell halves. The polypeptide is Segregation and condensation protein A (Streptococcus pyogenes serotype M18 (strain MGAS8232)).